The following is a 333-amino-acid chain: Adenosine deaminase (333 aa).

His12 and His14 together coordinate Zn(2+). His14, Asp16, and Gly170 together coordinate substrate. A Zn(2+)-binding site is contributed by His197. The active-site Proton donor is the Glu200. Asp278 contacts Zn(2+). Asp279 is a substrate binding site.

The protein belongs to the metallo-dependent hydrolases superfamily. Adenosine and AMP deaminases family. Adenosine deaminase subfamily. Requires Zn(2+) as cofactor.

The enzyme catalyses adenosine + H2O + H(+) = inosine + NH4(+). It catalyses the reaction 2'-deoxyadenosine + H2O + H(+) = 2'-deoxyinosine + NH4(+). In terms of biological role, catalyzes the hydrolytic deamination of adenosine and 2-deoxyadenosine. The chain is Adenosine deaminase from Salmonella dublin (strain CT_02021853).